A 227-amino-acid chain; its full sequence is Mitochondrial inner membrane protease ATP23 (227 aa).

His-124 contributes to the a divalent metal cation binding site. Glu-125 is a catalytic residue. An a divalent metal cation-binding site is contributed by His-128.

The protein belongs to the peptidase M76 family. As to quaternary structure, interacts with ATP6.

The protein localises to the mitochondrion inner membrane. Functionally, has a dual role in the assembly of mitochondrial ATPase. Acts as a protease that removes the N-terminal 10 residues of mitochondrial ATPase CF(0) subunit 6 (ATP6) at the intermembrane space side. Also involved in the correct assembly of the membrane-embedded ATPase CF(0) particle, probably mediating association of ATP6 with the subunit 9 ring. The chain is Mitochondrial inner membrane protease ATP23 (ATP23) from Saccharomyces cerevisiae (strain YJM789) (Baker's yeast).